Consider the following 966-residue polypeptide: Leucine--tRNA ligase (966 aa).

The 'HIGH' region motif lies at 41–51 (PYLNGNLHAGH). Positions 632-636 (KMSKS) match the 'KMSKS' region motif. Residue K635 coordinates ATP.

The protein belongs to the class-I aminoacyl-tRNA synthetase family.

It localises to the cytoplasm. It carries out the reaction tRNA(Leu) + L-leucine + ATP = L-leucyl-tRNA(Leu) + AMP + diphosphate. The protein is Leucine--tRNA ligase of Methanosarcina barkeri (strain Fusaro / DSM 804).